The chain runs to 383 residues: uncharacterized protein (383 aa).

Disordered stretches follow at residues Glu-27–Pro-66 and Leu-242–Arg-281. Composition is skewed to low complexity over residues Asn-28–Asn-63 and Leu-242–Ser-275.

This is an uncharacterized protein from Dictyostelium discoideum (Social amoeba).